The primary structure comprises 1741 residues: MSRWGKNIVVPLDSLCKEKENTNRPTVARSVGTVGKWGKMGFTSTRTYTLPAIHPMAAAAAAAAAAASPSQSPASTQDHDPNDLSVSVPEPPKPKKFFKSRNTAPPEVIAQIIQQLPHCGAGASPMRDHFSSAGAGAGGLTPTSGAQEAGGVKLKPGKGASSAERKRKSPKKKAATTSASTPSTPGAFYGASDRDGDGLSDPASEQPEQPSSASGKQKQKKPKEEKKLKPEAPPSRVLGRARKAVNYREVDEDERYPTPTKDLIIPKAGRQPAEVAATATLAAASSEAFISSTFGSPGSEPSLPPPTSAPSASASTSSQLPSASGSASNPPSASRTPEHPPIVLRISKGTSRLVSTDSEEPPSSSPAHQNQLNQLSVTEEEPAERSGDETVPASTPKITVKPLRPPTAADSVDGSSAAVGGASAGDSFEERKSQSLEPNEDEEEEEEEEDEEEEPPEINYCTVKISPDKPPKERLKLIIKTDVIRNAIAKAAAAAESRSEKKSRSKKHKHKQLLAAGSGAAPASGATPAEINSEFKTPSPHLALSEANSQQAQHTPSHLHQLHQLHPQRGSAVISPTTRSDHDFDSQSSVLGSISSKGNSTPQLLAQAVQEDSCVIRSRGSSVITSDLETSQHSSLVAPPSDIESRLESMMMTIDGAGTGAASAVPETPLQEDILAVLRGEVPRLNGNTDPEPTEEEDQQQQPKRATRGRGRKANNNVDVTPPATETRTRGRAKGADATTAAISPPTGKRNTRGTRGSRKAEQEVDMEVDETAMTTVPANEEQLEQATLPPRRGRNAAARANNNNLASVNNNINKIAANLSAKAEASRLAEGGVAGGAARSYGRKRKNQQVTQVLQQEPVPEEQETPDAEEEQPTPAKIPHTDHREHSPDHDPDPDPDELSNNSNNSSLQHDGSSSSPPPRDFKFKDKFKRTLTLDTQGAANAGAGGAAAAAPPESSGEQRGAVKLVISKKKGSIFKSRALVPSDQAEQATVAKRHLYKHSWDAALEANGGGTNSDASNASASGVGVAGAKDHLHHLAAGKSDGDFGDSPSSNNNGSSSACSSASTLRGDSPALGKISRLAGKQGVPATSTSSDAFDLDLEPIAGELDLERSAAGASAGGTGATTGGGGATGGGGPVRVDRKTKDYYPVVRNVKTAHQIQEIGEYQEMDDDVEYILDALQPHNPPATRCLSALQLAAKCMMPAFRMHVRAHGVVTKFFKALSDANKDLSLGLCTSAIMYILSQEGLNMDLDRDSLELMINLLEADGVGGSTETGHPDRAGYDRNKQKVRELCEEIKAQGKGTHLNVDSLTVGTLAMETLLSLTSKRAGEWFKEDLRKLGGLEHIIKTISDFCRPVIACDTEIDWQPTLLDNMQTVARCLRVLENVTQHNETNQRYMLTSGQGKAVETLCQLYRLCSRQIMLHPSDGGGSNKEHPGVAMRELLVPVLKVLINLTHTFNEAQPSLGAELLGQRGDVVETSFRLLLLSANYIPDQCVFELSILVLTLLINLCMHTVPNRAALMQAAAPAEYVADNPPAQGSVSALQALLEYFYKCEELARLVEKNTDAFLESNEKGKKKQEEVEETVNNLVQRAGHHMEHTLKGSYAAILVGNLIADNELYESVVRRQLRGNSFKEIIGVLEKYHTFMNLTSSLEAAFVAHMKSTKRIIDNFKKRDYIYEHSDEHDNPLPLNLETTAQVLAVGADASHAATSSTTVGSGSAPSSTSATGTTRAPRVYKTYSSHR.

Disordered regions lie at residues Ser68–Ser100, Cys119–Ala277, Ser291–Lys472, Lys490–Asp612, Leu675–Asn810, Lys823–Ala963, Ala1038–Arg1068, Ser1112–Arg1141, and Thr1708–Arg1741. Positions Arg165–Ala174 are enriched in basic residues. The segment covering Ala175–Pro185 has biased composition (low complexity). Thr258 bears the Phosphothreonine mark. Low complexity predominate over residues Ala309–Ser334. A Phosphoserine modification is found at Ser355. The segment covering Ala367–Val377 has biased composition (polar residues). Residues Ala408–Asp426 show a composition bias toward low complexity. A compositionally biased stretch (acidic residues) spans Pro438–Pro456. Basic residues predominate over residues Ser503–Gln512. Composition is skewed to low complexity over residues Ala515–Ala529 and Gln553–Gln568. Residues Ser586–Leu604 show a composition bias toward polar residues. Low complexity-rich tracts occupy residues Asn796–Asn810 and Gln849–Pro859. Positions Val860 to Gln873 are enriched in acidic residues. Positions Pro880 to Asp894 are enriched in basic and acidic residues. Ser888 bears the Phosphoserine mark. 2 stretches are compositionally biased toward low complexity: residues Gly939–Ala952 and Gly1047–Ser1065. Over residues Ser1117–Pro1136 the composition is skewed to gly residues. The 509-residue stretch at Asp1140–Thr1648 folds into the WAPL domain. Positions Thr1708–Ala1730 are enriched in low complexity.

It belongs to the WAPL family.

Its function is as follows. Has a role in female meiotic chromosome segregation in females; proximal heterochromatin is involved in chromosome pairing during female meiosis. Is a dominant suppressor of both white and Stubble position-effect variegation (PEV), while it is a weak enhancer of brown variegation. This chain is Protein wings apart-like, found in Drosophila melanogaster (Fruit fly).